Here is a 275-residue protein sequence, read N- to C-terminus: NH(3)-dependent NAD(+) synthetase (275 aa).

46–53 (GISGGQDS) lines the ATP pocket. Asp-52 contributes to the Mg(2+) binding site. Arg-140 is a deamido-NAD(+) binding site. Thr-160 contributes to the ATP binding site. Residue Glu-165 coordinates Mg(2+). Deamido-NAD(+)-binding residues include Lys-173 and Asp-180. ATP contacts are provided by Lys-189 and Thr-211. Deamido-NAD(+) is bound at residue 260-261 (HK).

It belongs to the NAD synthetase family. In terms of assembly, homodimer.

The enzyme catalyses deamido-NAD(+) + NH4(+) + ATP = AMP + diphosphate + NAD(+) + H(+). The protein operates within cofactor biosynthesis; NAD(+) biosynthesis; NAD(+) from deamido-NAD(+) (ammonia route): step 1/1. Its function is as follows. Catalyzes the ATP-dependent amidation of deamido-NAD to form NAD. Uses ammonia as a nitrogen source. The protein is NH(3)-dependent NAD(+) synthetase of Escherichia coli O8 (strain IAI1).